Consider the following 193-residue polypeptide: ATP-dependent Clp protease proteolytic subunit 2 (193 aa).

Ser98 functions as the Nucleophile in the catalytic mechanism. His123 is a catalytic residue.

Belongs to the peptidase S14 family. Fourteen ClpP subunits assemble into 2 heptameric rings which stack back to back to give a disk-like structure with a central cavity, resembling the structure of eukaryotic proteasomes.

The protein resides in the cytoplasm. It carries out the reaction Hydrolysis of proteins to small peptides in the presence of ATP and magnesium. alpha-casein is the usual test substrate. In the absence of ATP, only oligopeptides shorter than five residues are hydrolyzed (such as succinyl-Leu-Tyr-|-NHMec, and Leu-Tyr-Leu-|-Tyr-Trp, in which cleavage of the -Tyr-|-Leu- and -Tyr-|-Trp bonds also occurs).. Its function is as follows. Cleaves peptides in various proteins in a process that requires ATP hydrolysis. Has a chymotrypsin-like activity. Plays a major role in the degradation of misfolded proteins. In Bacillus cereus (strain ATCC 14579 / DSM 31 / CCUG 7414 / JCM 2152 / NBRC 15305 / NCIMB 9373 / NCTC 2599 / NRRL B-3711), this protein is ATP-dependent Clp protease proteolytic subunit 2.